We begin with the raw amino-acid sequence, 90 residues long: EGVPSTAIREISLLKEMQHANIVRLQDVVHSEKRLYLVFEYLDLDLKKHMDSSPEFSKDPRLVKMFLYQILRGIAYCHSHRVLHRDLKPQ.

Positions 1–90 (EGVPSTAIRE…RVLHRDLKPQ (90 aa)) constitute a Protein kinase domain. Residue D86 is the Proton acceptor of the active site.

This sequence belongs to the protein kinase superfamily. CMGC Ser/Thr protein kinase family. CDC2/CDKX subfamily. As to expression, differentially expressed in leaves, protoplasts.

The enzyme catalyses L-seryl-[protein] + ATP = O-phospho-L-seryl-[protein] + ADP + H(+). The catalysed reaction is L-threonyl-[protein] + ATP = O-phospho-L-threonyl-[protein] + ADP + H(+). It carries out the reaction [DNA-directed RNA polymerase] + ATP = phospho-[DNA-directed RNA polymerase] + ADP + H(+). With respect to regulation, phosphorylation inactivates the enzyme. Functionally, plays a key role in the control of the eukaryotic cell cycle. Component of the kinase complex that phosphorylates the repetitive C-terminus of RNA polymerase II. The protein is Cell division control protein 2 homolog (CDC2) of Petunia hybrida (Petunia).